A 431-amino-acid chain; its full sequence is D-inositol 3-phosphate glycosyltransferase (431 aa).

His-14 provides a ligand contact to 1D-myo-inositol 3-phosphate. UDP-N-acetyl-alpha-D-glucosamine-binding positions include 20-21 and Gly-28; that span reads QP. 1D-myo-inositol 3-phosphate is bound by residues 25 to 30, Lys-83, Tyr-116, Thr-140, and Arg-160; that span reads DAGGMN. UDP-N-acetyl-alpha-D-glucosamine-binding residues include Arg-240 and Lys-245. Mg(2+) is bound by residues Tyr-315, Arg-316, and Ala-318. Residues Glu-328 and Glu-336 each coordinate UDP-N-acetyl-alpha-D-glucosamine. Thr-342 serves as a coordination point for Mg(2+).

This sequence belongs to the glycosyltransferase group 1 family. MshA subfamily. In terms of assembly, homodimer.

It carries out the reaction 1D-myo-inositol 3-phosphate + UDP-N-acetyl-alpha-D-glucosamine = 1D-myo-inositol 2-acetamido-2-deoxy-alpha-D-glucopyranoside 3-phosphate + UDP + H(+). Catalyzes the transfer of a N-acetyl-glucosamine moiety to 1D-myo-inositol 3-phosphate to produce 1D-myo-inositol 2-acetamido-2-deoxy-glucopyranoside 3-phosphate in the mycothiol biosynthesis pathway. The chain is D-inositol 3-phosphate glycosyltransferase from Thermomonospora curvata (strain ATCC 19995 / DSM 43183 / JCM 3096 / KCTC 9072 / NBRC 15933 / NCIMB 10081 / Henssen B9).